The sequence spans 188 residues: UPF0200 protein M1627_1244 (188 aa).

Residue 15-22 (GMPGSGKS) coordinates ATP.

Belongs to the UPF0200 family.

The chain is UPF0200 protein M1627_1244 from Saccharolobus islandicus (strain M.16.27) (Sulfolobus islandicus).